Here is a 348-residue protein sequence, read N- to C-terminus: Ferredoxin--NADP reductase (348 aa).

FAD is bound by residues T25, E44, Q52, Y57, V97, F132, D298, and S339.

The protein belongs to the ferredoxin--NADP reductase type 2 family. Homodimer. Requires FAD as cofactor.

The enzyme catalyses 2 reduced [2Fe-2S]-[ferredoxin] + NADP(+) + H(+) = 2 oxidized [2Fe-2S]-[ferredoxin] + NADPH. The chain is Ferredoxin--NADP reductase from Chlorobium phaeobacteroides (strain BS1).